The primary structure comprises 87 residues: Small ribosomal subunit protein uS17 (87 aa).

Belongs to the universal ribosomal protein uS17 family. In terms of assembly, part of the 30S ribosomal subunit.

One of the primary rRNA binding proteins, it binds specifically to the 5'-end of 16S ribosomal RNA. The chain is Small ribosomal subunit protein uS17 from Pelotomaculum thermopropionicum (strain DSM 13744 / JCM 10971 / SI).